The chain runs to 735 residues: Receptor-type guanylate cyclase gcy-27 (735 aa).

An N-linked (GlcNAc...) asparagine glycan is attached at Asn-11. A helical membrane pass occupies residues 28–48; it reads FIICTLPVPIYFVVVAIWTIN. The region spanning 188-465 is the Protein kinase domain; the sequence is ALTSRRRVFG…IENLRNAIAI (278 aa). The 131-residue stretch at 538 to 668 folds into the Guanylate cyclase domain; it reads TVMFVQICDF…DTVNFASRMQ (131 aa).

The protein belongs to the adenylyl cyclase class-4/guanylyl cyclase family. As to expression, expressed bilaterally in ASK, ASI and ASJ sensory neurons.

It localises to the cell membrane. The enzyme catalyses GTP = 3',5'-cyclic GMP + diphosphate. Guanylate cyclase involved in the production of the second messenger cGMP. May be involved in sensitivity to quinine by regulating egl-4 activity through the production of cGMP. Promotes the calcium flux to the cytoplasm in ASJ sensory neurons upon removal of a nitric oxide (NO) stimulus and is thereby involved in the behavioral avoidance response to NO-producing organisms like P.aeruginosa. This is Receptor-type guanylate cyclase gcy-27 from Caenorhabditis elegans.